Reading from the N-terminus, the 378-residue chain is Probable mannosyltransferase MNT3 (378 aa).

The Cytoplasmic segment spans residues Met1 to His4. A helical; Signal-anchor for type II membrane protein membrane pass occupies residues Leu5–Phe25. At Lys26–Asn378 the chain is on the lumenal side. Residues Asn73 and Asn149 are each glycosylated (N-linked (GlcNAc...) asparagine).

Belongs to the glycosyltransferase 15 family.

Its subcellular location is the membrane. In terms of biological role, transfers an alpha-D-mannosyl residue from GDP-mannose into lipid-linked oligosaccharide, forming an alpha-(1-&gt;2)-D-mannosyl-D-mannose linkage. In Candida albicans (strain SC5314 / ATCC MYA-2876) (Yeast), this protein is Probable mannosyltransferase MNT3 (MNT3).